Consider the following 207-residue polypeptide: Crossover junction endodeoxyribonuclease RuvC (207 aa).

Residues D11, E71, and D143 contribute to the active site. The Mg(2+) site is built by D11, E71, and D143.

The protein belongs to the RuvC family. In terms of assembly, homodimer which binds Holliday junction (HJ) DNA. The HJ becomes 2-fold symmetrical on binding to RuvC with unstacked arms; it has a different conformation from HJ DNA in complex with RuvA. In the full resolvosome a probable DNA-RuvA(4)-RuvB(12)-RuvC(2) complex forms which resolves the HJ. Mg(2+) is required as a cofactor.

It is found in the cytoplasm. The catalysed reaction is Endonucleolytic cleavage at a junction such as a reciprocal single-stranded crossover between two homologous DNA duplexes (Holliday junction).. Its function is as follows. The RuvA-RuvB-RuvC complex processes Holliday junction (HJ) DNA during genetic recombination and DNA repair. Endonuclease that resolves HJ intermediates. Cleaves cruciform DNA by making single-stranded nicks across the HJ at symmetrical positions within the homologous arms, yielding a 5'-phosphate and a 3'-hydroxyl group; requires a central core of homology in the junction. The consensus cleavage sequence is 5'-(A/T)TT(C/G)-3'. Cleavage occurs on the 3'-side of the TT dinucleotide at the point of strand exchange. HJ branch migration catalyzed by RuvA-RuvB allows RuvC to scan DNA until it finds its consensus sequence, where it cleaves and resolves the cruciform DNA. This chain is Crossover junction endodeoxyribonuclease RuvC, found in Methylobacterium radiotolerans (strain ATCC 27329 / DSM 1819 / JCM 2831 / NBRC 15690 / NCIMB 10815 / 0-1).